A 210-amino-acid polypeptide reads, in one-letter code: Probable GTP-binding protein EngB (210 aa).

An EngB-type G domain is found at 30–204; the sequence is QGYEVAFAGR…YRVLADWMEL (175 aa). Residues 38–45, 64–68, 82–85, 149–152, and 182–185 each bind GTP; these read GRSNAGKS, GRTQL, DLPG, TKAD, and LFSA. The Mg(2+) site is built by serine 45 and threonine 66.

It belongs to the TRAFAC class TrmE-Era-EngA-EngB-Septin-like GTPase superfamily. EngB GTPase family. Mg(2+) is required as a cofactor.

Necessary for normal cell division and for the maintenance of normal septation. The polypeptide is Probable GTP-binding protein EngB (Pseudomonas putida (strain ATCC 700007 / DSM 6899 / JCM 31910 / BCRC 17059 / LMG 24140 / F1)).